The following is a 305-amino-acid chain: Fructose-bisphosphate aldolase (305 aa).

Residue Ser-49 coordinates D-glyceraldehyde 3-phosphate. The active-site Proton donor is the Asp-80. Zn(2+)-binding residues include His-81, Asp-102, Glu-132, and His-178. A dihydroxyacetone phosphate-binding site is contributed by Gly-179. His-208 is a Zn(2+) binding site. Residues 209-211 (GAS) and 251-254 (NTDT) each bind dihydroxyacetone phosphate.

The protein belongs to the class II fructose-bisphosphate aldolase family. As to quaternary structure, homotetramer. It depends on Zn(2+) as a cofactor.

The catalysed reaction is beta-D-fructose 1,6-bisphosphate = D-glyceraldehyde 3-phosphate + dihydroxyacetone phosphate. It participates in carbohydrate degradation; glycolysis; D-glyceraldehyde 3-phosphate and glycerone phosphate from D-glucose: step 4/4. Catalyzes the aldol condensation of dihydroxyacetone phosphate (DHAP or glycerone-phosphate) with glyceraldehyde 3-phosphate (G3P) to form fructose 1,6-bisphosphate (FBP) in gluconeogenesis and the reverse reaction in glycolysis. The sequence is that of Fructose-bisphosphate aldolase from Thermus caldophilus.